The sequence spans 320 residues: Lipoyl synthase (320 aa).

Residues 9–31 are disordered; sequence ANDARPRHPEKAHRPDQPIQRKP. Residues 12–31 are compositionally biased toward basic and acidic residues; sequence ARPRHPEKAHRPDQPIQRKP. The [4Fe-4S] cluster site is built by Cys-60, Cys-65, Cys-71, Cys-86, Cys-90, Cys-93, and Ser-299. The 217-residue stretch at 72-288 folds into the Radical SAM core domain; it reads WEKKHATFMI…ETTAYAKGFL (217 aa).

Belongs to the radical SAM superfamily. Lipoyl synthase family. The cofactor is [4Fe-4S] cluster.

It is found in the cytoplasm. The catalysed reaction is [[Fe-S] cluster scaffold protein carrying a second [4Fe-4S](2+) cluster] + N(6)-octanoyl-L-lysyl-[protein] + 2 oxidized [2Fe-2S]-[ferredoxin] + 2 S-adenosyl-L-methionine + 4 H(+) = [[Fe-S] cluster scaffold protein] + N(6)-[(R)-dihydrolipoyl]-L-lysyl-[protein] + 4 Fe(3+) + 2 hydrogen sulfide + 2 5'-deoxyadenosine + 2 L-methionine + 2 reduced [2Fe-2S]-[ferredoxin]. It functions in the pathway protein modification; protein lipoylation via endogenous pathway; protein N(6)-(lipoyl)lysine from octanoyl-[acyl-carrier-protein]: step 2/2. In terms of biological role, catalyzes the radical-mediated insertion of two sulfur atoms into the C-6 and C-8 positions of the octanoyl moiety bound to the lipoyl domains of lipoate-dependent enzymes, thereby converting the octanoylated domains into lipoylated derivatives. This Methylobacterium nodulans (strain LMG 21967 / CNCM I-2342 / ORS 2060) protein is Lipoyl synthase.